The chain runs to 975 residues: C-1-tetrahydrofolate synthase, mitochondrial (975 aa).

The transit peptide at 1–34 (MLSRLSLLSNSRAFQQARWRIYRLKVSPTVHASQ) directs the protein to the mitochondrion. The segment at 35 to 343 (YHILSGRKLA…KPLPLHLESP (309 aa)) is methylenetetrahydrofolate dehydrogenase and cyclohydrolase. Substrate contacts are provided by residues 83–87 (YVRMK) and 130–132 (IQL). Residues 201-203 (GRS) and Ser-226 each bind NADP(+). A substrate-binding site is contributed by 301 to 305 (PGGVG). Residues 344-975 (VPSDIDISRA…DDDGEIEGLF (632 aa)) form a formyltetrahydrofolate synthetase region. 408-415 (TPLGEGKS) serves as a coordination point for ATP.

It in the N-terminal section; belongs to the tetrahydrofolate dehydrogenase/cyclohydrolase family. This sequence in the C-terminal section; belongs to the formate--tetrahydrofolate ligase family. As to quaternary structure, homodimer.

It is found in the mitochondrion. It carries out the reaction (6R)-5,10-methylene-5,6,7,8-tetrahydrofolate + NADP(+) = (6R)-5,10-methenyltetrahydrofolate + NADPH. The catalysed reaction is (6R)-5,10-methenyltetrahydrofolate + H2O = (6R)-10-formyltetrahydrofolate + H(+). It catalyses the reaction (6S)-5,6,7,8-tetrahydrofolate + formate + ATP = (6R)-10-formyltetrahydrofolate + ADP + phosphate. The protein operates within one-carbon metabolism; tetrahydrofolate interconversion. In terms of biological role, mitochondrial isozyme of C-1-tetrahydrofolate synthase. The trifunctional enzyme catalyzes the interconversion of the one-carbon derivatives of tetrahydrofolate (THF) between different oxidation states by the enzymatic activities 10-formyltetrahydrofolate synthetase, 5,lO-methenyltetrahydrofolate cyclohydrolase, and 5,lO-methylenetetrahydrofolate dehydrogenase. The polypeptide is C-1-tetrahydrofolate synthase, mitochondrial (Saccharomyces cerevisiae (strain ATCC 204508 / S288c) (Baker's yeast)).